Reading from the N-terminus, the 433-residue chain is 23S rRNA (uracil(1939)-C(5))-methyltransferase RlmD (433 aa).

The TRAM domain maps to 10–68; sequence RTTTRQIITVSVNDLDSFGQGVARHNGKTLFIPGLLPQENAEVTVTEDKKQYARAKVVR. 4 residues coordinate [4Fe-4S] cluster: cysteine 81, cysteine 87, cysteine 90, and cysteine 162. The S-adenosyl-L-methionine site is built by glutamine 265, phenylalanine 294, asparagine 299, glutamate 315, asparagine 342, and aspartate 363. Cysteine 389 acts as the Nucleophile in catalysis.

It belongs to the class I-like SAM-binding methyltransferase superfamily. RNA M5U methyltransferase family. RlmD subfamily.

It carries out the reaction uridine(1939) in 23S rRNA + S-adenosyl-L-methionine = 5-methyluridine(1939) in 23S rRNA + S-adenosyl-L-homocysteine + H(+). Its function is as follows. Catalyzes the formation of 5-methyl-uridine at position 1939 (m5U1939) in 23S rRNA. This is 23S rRNA (uracil(1939)-C(5))-methyltransferase RlmD from Escherichia coli (strain UTI89 / UPEC).